The chain runs to 613 residues: Nuclear receptor subfamily 1 group D member 1 (613 aa).

A compositionally biased stretch (polar residues) spans 1–48 (MTTLDSNNNTGGVITYIGSSGSSPNRTSPESLYSDSSNGSFQSLTQGC). A required for phosphorylation by CSNK1E and cytoplasmic localization region spans residues 1–70 (MTTLDSNNNT…TQDPARSFGS (70 aa)). Residues 1-102 (MTTLDSNNNT…SSFYNGSPPG (102 aa)) form a disordered region. Residues 1-129 (MTTLDSNNNT…TSNITKLNGM (129 aa)) are modulating. Residues 49 to 285 (PTYFPPSPTG…PPRSPSPEPT (237 aa)) are crucial for activation of GJA1. Serine 55 and serine 59 each carry phosphoserine; by GSK3-beta. Positions 69-102 (GSIPPSLGDDGSPSSSSSSSSSSSSSFYNGSPPG) are enriched in low complexity. The nuclear receptor DNA-binding region spans 130–206 (VLLCKVCGDV…VGMSRDAVRF (77 aa)). 2 consecutive NR C4-type zinc fingers follow at residues 133–153 (CKVCGDVASGFHYGVHACEGC) and 170–194 (CLKNENCSIVRINRNRCQQCRFKKC). An N6-acetyllysine; by KAT5 mark is found at lysine 192 and lysine 193. Residues 233–286 (SSQCPLETPPTQHPTPGPMGPSPPPAPAPSPLVGFSQFPQQLTPPRSPSPEPTV) form a disordered region. The segment covering 239–262 (ETPPTQHPTPGPMGPSPPPAPAPS) has biased composition (pro residues). A Phosphothreonine; by CDK1 modification is found at threonine 275. In terms of domain architecture, NR LBD spans 285-613 (TVEDVISQVA…KLLSFRVDAQ (329 aa)). Heme is bound at residue cysteine 417. An N6-acetyllysine modification is found at lysine 590. Residue histidine 601 participates in heme binding.

Belongs to the nuclear hormone receptor family. NR1 subfamily. In terms of assembly, binds DNA as a monomer or a homodimer. Interacts with C1D, SP1 and ZNHIT1. Interacts with OPHN1 (via C-terminus). Interacts with PER2; the interaction associates PER2 to BMAL1 promoter region. Interacts with CRY1. Interacts with CCAR2. Interacts with NR2E3. Interacts with SIAH2. Interacts with FBXW7 and CDK1. Interacts with HUWE1. Interacts with NR0B2. Interacts with NFIL3. Interacts (via domain NR LBD) with HSP90AA1 and HSP90AB1. In terms of processing, ubiquitinated, leading to its proteasomal degradation. Ubiquitinated by the SCF(FBXW7) complex when phosphorylated by CDK1 leading to its proteasomal degradation. Ubiquitinated by SIAH2; leading to its proteasomal degradation. Rapidly ubiquitinated in response to inflammatory triggers and sumoylation is a prerequisite to its ubiquitination. Post-translationally, sumoylated by UBE2I, desumoylated by SENP1, and sumoylation is a prerequisite to its ubiquitination. Phosphorylated by CSNK1E; phosphorylation enhances its cytoplasmic localization. In terms of processing, undergoes lysosome-mediated degradation in a time-dependent manner in the liver. In terms of tissue distribution, expressed in all tissues and cell lines examined. Expressed at high levels in some squamous carcinoma cell lines.

Its subcellular location is the nucleus. The protein localises to the cytoplasm. It localises to the cell projection. It is found in the dendrite. The protein resides in the dendritic spine. In terms of biological role, transcriptional repressor which coordinates circadian rhythm and metabolic pathways in a heme-dependent manner. Integral component of the complex transcription machinery that governs circadian rhythmicity and forms a critical negative limb of the circadian clock by directly repressing the expression of core clock components BMAL1, CLOCK and CRY1. Also regulates genes involved in metabolic functions, including lipid and bile acid metabolism, adipogenesis, gluconeogenesis and the macrophage inflammatory response. Acts as a receptor for heme which stimulates its interaction with the NCOR1/HDAC3 corepressor complex, enhancing transcriptional repression. Recognizes two classes of DNA response elements within the promoter of its target genes and can bind to DNA as either monomers or homodimers, depending on the nature of the response element. Binds as a monomer to a response element composed of the consensus half-site motif 5'-[A/G]GGTCA-3' preceded by an A/T-rich 5' sequence (RevRE), or as a homodimer to a direct repeat of the core motif spaced by two nucleotides (RevDR-2). Acts as a potent competitive repressor of ROR alpha (RORA) function and regulates the levels of its ligand heme by repressing the expression of PPARGC1A, a potent inducer of heme synthesis. Regulates lipid metabolism by repressing the expression of APOC3 and by influencing the activity of sterol response element binding proteins (SREBPs); represses INSIG2 which interferes with the proteolytic activation of SREBPs which in turn govern the rhythmic expression of enzymes with key functions in sterol and fatty acid synthesis. Regulates gluconeogenesis via repression of G6PC1 and PEPCK and adipocyte differentiation via repression of PPARG. Regulates glucagon release in pancreatic alpha-cells via the AMPK-NAMPT-SIRT1 pathway and the proliferation, glucose-induced insulin secretion and expression of key lipogenic genes in pancreatic-beta cells. Positively regulates bile acid synthesis by increasing hepatic expression of CYP7A1 via repression of NR0B2 and NFIL3 which are negative regulators of CYP7A1. Modulates skeletal muscle oxidative capacity by regulating mitochondrial biogenesis and autophagy; controls mitochondrial biogenesis and respiration by interfering with the STK11-PRKAA1/2-SIRT1-PPARGC1A signaling pathway. Represses the expression of SERPINE1/PAI1, an important modulator of cardiovascular disease and the expression of inflammatory cytokines and chemokines in macrophages. Represses gene expression at a distance in macrophages by inhibiting the transcription of enhancer-derived RNAs (eRNAs). Plays a role in the circadian regulation of body temperature and negatively regulates thermogenic transcriptional programs in brown adipose tissue (BAT); imposes a circadian oscillation in BAT activity, increasing body temperature when awake and depressing thermogenesis during sleep. In concert with NR2E3, regulates transcriptional networks critical for photoreceptor development and function. In addition to its activity as a repressor, can also act as a transcriptional activator. In the ovarian granulosa cells acts as a transcriptional activator of STAR which plays a role in steroid biosynthesis. In collaboration with SP1, activates GJA1 transcription in a heme-independent manner. Represses the transcription of CYP2B10, CYP4A10 and CYP4A14. Represses the transcription of CES2. Represses and regulates the circadian expression of TSHB in a NCOR1-dependent manner. Negatively regulates the protein stability of NR3C1 and influences the time-dependent subcellular distribution of NR3C1, thereby affecting its transcriptional regulatory activity. Plays a critical role in the circadian control of neutrophilic inflammation in the lung; under resting, non-stress conditions, acts as a rhythmic repressor to limit inflammatory activity whereas in the presence of inflammatory triggers undergoes ubiquitin-mediated degradation thereby relieving inhibition of the inflammatory response. Plays a key role in the circadian regulation of microglial activation and neuroinflammation; suppresses microglial activation through the NF-kappaB pathway in the central nervous system. Plays a role in the regulation of the diurnal rhythms of lipid and protein metabolism in the skeletal muscle via transcriptional repression of genes controlling lipid and amino acid metabolism in the muscle. This chain is Nuclear receptor subfamily 1 group D member 1 (NR1D1), found in Bos taurus (Bovine).